A 91-amino-acid chain; its full sequence is uncharacterized protein (91 aa).

It is found in the plastid. Its subcellular location is the cyanelle. This is an uncharacterized protein from Cyanophora paradoxa.